A 133-amino-acid polypeptide reads, in one-letter code: Profilin (133 aa).

It belongs to the profilin family. As to quaternary structure, occurs in many kinds of cells as a complex with monomeric actin in a 1:1 ratio.

The protein resides in the cytoplasm. It localises to the cytoskeleton. Its function is as follows. Binds to actin and affects the structure of the cytoskeleton. At high concentrations, profilin prevents the polymerization of actin, whereas it enhances it at low concentrations. By binding to PIP2, it inhibits the formation of IP3 and DG. This Mercurialis annua (Annual mercury) protein is Profilin.